The chain runs to 360 residues: Membrane-bound lytic murein transglycosylase C (360 aa).

A signal peptide spans M1–S16. C17 carries the N-palmitoyl cysteine lipid modification. Residue C17 is the site of S-diacylglycerol cysteine attachment.

It belongs to the transglycosylase Slt family.

It is found in the cell outer membrane. It catalyses the reaction Exolytic cleavage of the (1-&gt;4)-beta-glycosidic linkage between N-acetylmuramic acid (MurNAc) and N-acetylglucosamine (GlcNAc) residues in peptidoglycan, from either the reducing or the non-reducing ends of the peptidoglycan chains, with concomitant formation of a 1,6-anhydrobond in the MurNAc residue.. Its function is as follows. Murein-degrading enzyme. May play a role in recycling of muropeptides during cell elongation and/or cell division. The protein is Membrane-bound lytic murein transglycosylase C of Citrobacter koseri (strain ATCC BAA-895 / CDC 4225-83 / SGSC4696).